Reading from the N-terminus, the 341-residue chain is S-adenosylmethionine:tRNA ribosyltransferase-isomerase (341 aa).

Belongs to the QueA family. As to quaternary structure, monomer.

The protein resides in the cytoplasm. The catalysed reaction is 7-aminomethyl-7-carbaguanosine(34) in tRNA + S-adenosyl-L-methionine = epoxyqueuosine(34) in tRNA + adenine + L-methionine + 2 H(+). The protein operates within tRNA modification; tRNA-queuosine biosynthesis. Transfers and isomerizes the ribose moiety from AdoMet to the 7-aminomethyl group of 7-deazaguanine (preQ1-tRNA) to give epoxyqueuosine (oQ-tRNA). This Desulforamulus reducens (strain ATCC BAA-1160 / DSM 100696 / MI-1) (Desulfotomaculum reducens) protein is S-adenosylmethionine:tRNA ribosyltransferase-isomerase.